Here is a 371-residue protein sequence, read N- to C-terminus: Alginate lyase (371 aa).

Residues 1-28 form the signal peptide; sequence MRRPMTLFKRISSPALLALALFGGAAHA. Substrate-binding positions include 67-68, 140-141, and Tyr-258; these read SK and HT.

This sequence belongs to the polysaccharide lyase 5 family.

It is found in the periplasm. The catalysed reaction is Eliminative cleavage of alginate to give oligosaccharides with 4-deoxy-alpha-L-erythro-hex-4-enuronosyl groups at their non-reducing ends and beta-D-mannuronate at their reducing end.. In terms of biological role, catalyzes the depolymerization of alginate by cleaving the beta-1,4 glycosidic bond between two adjacent sugar residues via a beta-elimination mechanism. May serve to degrade mislocalized alginate that is trapped in the periplasmic space. This chain is Alginate lyase, found in Pseudomonas putida (strain ATCC 47054 / DSM 6125 / CFBP 8728 / NCIMB 11950 / KT2440).